The primary structure comprises 184 residues: ATP synthase subunit b 1 (184 aa).

The helical transmembrane segment at 4-24 (LSILAVLAASPAMAATGPFLS) threads the bilayer.

Belongs to the ATPase B chain family. In terms of assembly, F-type ATPases have 2 components, F(1) - the catalytic core - and F(0) - the membrane proton channel. F(1) has five subunits: alpha(3), beta(3), gamma(1), delta(1), epsilon(1). F(0) has three main subunits: a(1), b(2) and c(10-14). The alpha and beta chains form an alternating ring which encloses part of the gamma chain. F(1) is attached to F(0) by a central stalk formed by the gamma and epsilon chains, while a peripheral stalk is formed by the delta and b chains.

It localises to the cell inner membrane. Functionally, f(1)F(0) ATP synthase produces ATP from ADP in the presence of a proton or sodium gradient. F-type ATPases consist of two structural domains, F(1) containing the extramembraneous catalytic core and F(0) containing the membrane proton channel, linked together by a central stalk and a peripheral stalk. During catalysis, ATP synthesis in the catalytic domain of F(1) is coupled via a rotary mechanism of the central stalk subunits to proton translocation. Its function is as follows. Component of the F(0) channel, it forms part of the peripheral stalk, linking F(1) to F(0). In Cereibacter sphaeroides (strain ATCC 17029 / ATH 2.4.9) (Rhodobacter sphaeroides), this protein is ATP synthase subunit b 1.